The following is a 257-amino-acid chain: uncharacterized protein (257 aa).

An N-terminal signal peptide occupies residues 1–26 (MKKAFILSAAAAVGLFTFGGVQQASA). The interval 80-135 (AKQSNVKVQDVQKTETAKPAQKTTEKAAADQNTASKAPATAEKTNTTTSAPSSVSA) is disordered. Residues 121–134 (EKTNTTTSAPSSVS) show a composition bias toward polar residues. The region spanning 141 to 254 (VELTNAERQK…ESGSIWTQQF (114 aa)) is the SCP domain.

This is an uncharacterized protein from Bacillus subtilis (strain 168).